The chain runs to 44 residues: SEGTSCYIYHGVYGICKAKCAEDMKAMAGMGVCEGDLCCYKTPW.

3 disulfides stabilise this stretch: cysteine 6–cysteine 38, cysteine 16–cysteine 33, and cysteine 20–cysteine 39. Residues 7 to 10 form an inhibitory motif region; the sequence is YIYH.

The protein belongs to the sea anemone alpha-amylase inhibitor family.

It localises to the secreted. In terms of biological role, mammalian alpha-amylase (AMY2A) inhibitor. The recombinant peptide inhibits porcine pancreatic (Ki=0.17 nM) and human saliva alpha-amylases (Ki=7.7 nM). It does not show antimicrobial (tested on fungi and bacteria) or channel modulating activities (tested on 18 voltage-gated sodium and potassium channles). This Heteractis magnifica (Magnificent sea anemone) protein is Alpha-amylase inhibitor magnificamide.